The following is a 1571-amino-acid chain: MSFTLHSVFFTLKVSIFLGSLVGLCLGLEFMGLPNQWARYLRWDASTRSDLSFQFKTNVSTGLLLYLDDGGVCDFLCLSLVDGRVQLRFSMDCAETTVLSNKQVNDSSWHFLMVSRDRVRTGLVIDGEGQSGELRPQRPYMDVVSDLFLGGVPADIRPSALTLDGVQSMPGFKGLMLDLKYGNSEPRLLGSQSVQLEAEGPCGERPCENGGICFLLDGHPTCDCSTTGYGGTLCSEDVSQGPGLSHLMMSEQAREENVATFRGSEYLCYDLSQNPIQSSSDEITLSFKTWQRNGLILHTGKSADYVNLALKDGAVSLVINLGSGAFEAIVEPVNGKFNDNAWHDVKVTRNLRQVTISVDGILTTTGYTQEDYTMLGSDDFFYVGGSPSTADLPGSPVSNNFMGCLKEVVYKNNDIRLELSRLARIGDTKMKIYGEVVFKCENVATLDPINFETPEAYISLPKWNTKRMGSISFDFRTTEPNGLILFTHGKPQERKDVRSQKNTKVDFFAVELLDGNLYLLLDMGSGTIKVKATQKKANDGEWYHVDIQRDGRSGTISVNSRRTPFTASGESEILDLEGDMYLGGLPENRAGLILPTELWTAMLNYGYVGCIRDLFIDGRSKNIRQLAEMQNAAGVKSSCSRMSAKQCDSYPCKNNAVCKDGWNRFICDCTGTGYWGRTCEREASILSYDGSMYMKVIMPMVMHTEAEDVSFRFMSQRAYGLLVATTSRDSADTLRLELDGGRVKLMVNLDCIRINCNSSKGPETLYAGQKLNDNEWHTVRVVRRGKSLKLTVDDDVAEGTMVGDHTRLEFHNIETGIMTEKRYISVVPSSFIGHLQSLMFNGLLYIDLCKNGDIDYCELKARFGLRNIIADPVTFKTKSSYLTLATLQAYTSMHLFFQFKTTSADGFILFNSGDGNDFIAVELVKGYIHYVFDLGNGPNVIKGNSDRPLNDNQWHNVVITRDSSNTHSLKVDTKVVTQVINGAKNLDLKGDLYMAGLAQGMYSNLPKLVASRDGFQGCLASVDLNGRLPDLINDALHRSGQIERGCEGPSTTCQEDSCANQGVCMQQWEGFTCDCSMTSYSGNQCNDPGATYIFGKSGGLILYTWPANDRPSTRSDRLAVGFSTTVKDGILVRIDSAPGLGDFLQLHIEQGKIGVVFNIGTVDISIKEERTPVNDGKYHVVRFTRNGGNATLQVDNWPVNEHYPTGNTDNERLQMVKQKIPFKYNRPVEEWLQEKGRQLTIFNTQAQIAIGGKDKGRLFQGQLSGLYYDGLKVLNMAAENNPNIKINGSVRLVGEVPSVSGTTQTTSMPPEMSTTVMETTTTMATTTTRKNRSTASIQPTSDDLVSSAECSSDDEDFVECEPSTDKSLSTSIFEGGYKAHAPKWESKDFRPNKVSETSRTTTTSLSPELIRFTASSSSGMVPKLPAGKMNNRDLKPQPDIVLLPLPTAYELDSTKLKSPLITSPMFRNVPTANPTEPGIRRVPGASEVIRESSSTTGMVVGIVAAAALCILILLYAMYKYRNRDEGSYQVDETRNYISNSAQSNGTLMKEKQASSKSGHKKQKNKDKEYYV.

An N-terminal signal peptide occupies residues 1-27 (MSFTLHSVFFTLKVSIFLGSLVGLCLG). Residues 28–202 (LEFMGLPNQW…SVQLEAEGPC (175 aa)) form the Laminin G-like 1 domain. The Extracellular portion of the chain corresponds to 28–1496 (LEFMGLPNQW…EVIRESSSTT (1469 aa)). 2 N-linked (GlcNAc...) asparagine glycosylation sites follow: Asn58 and Asn105. Residues 198 to 235 (AEGPCGERPCENGGICFLLDGHPTCDCSTTGYGGTLCS) form the EGF-like 1 domain. Cystine bridges form between Cys202–Cys213, Cys207–Cys222, and Cys224–Cys234. Laminin G-like domains lie at 258 to 440 (VATF…VFKC) and 447 to 639 (DPIN…KSSC). Ca(2+) is bound by residues Asp304, Leu321, and Met374. 5 cysteine pairs are disulfide-bonded: Cys404/Cys440, Cys610/Cys639, Cys647/Cys658, Cys652/Cys667, and Cys669/Cys679. Residues 643–680 (SAKQCDSYPCKNNAVCKDGWNRFICDCTGTGYWGRTCE) form the EGF-like 2 domain. Laminin G-like domains follow at residues 685–857 (ILSY…IDYC) and 871–1046 (DPVT…ERGC). Positions 732 and 749 each coordinate Ca(2+). A glycan (N-linked (GlcNAc...) asparagine) is linked at Asn757. Arg807 serves as a coordination point for Ca(2+). 4 cysteine pairs are disulfide-bonded: Cys1018–Cys1046, Cys1053–Cys1064, Cys1058–Cys1073, and Cys1075–Cys1085. In terms of domain architecture, EGF-like 3 spans 1049-1086 (PSTTCQEDSCANQGVCMQQWEGFTCDCSMTSYSGNQCN). Residues 1090 to 1290 (ATYIFGKSGG…NPNIKINGSV (201 aa)) form the Laminin G-like 6 domain. Ca(2+) is bound by residues Asp1142 and Ile1159. An N-linked (GlcNAc...) asparagine glycan is attached at Asn1189. Ca(2+) is bound by residues Ile1241 and Asn1243. Asn1287 and Asn1331 each carry an N-linked (GlcNAc...) asparagine glycan. Positions 1324–1348 (ATTTTRKNRSTASIQPTSDDLVSSA) are disordered. Residues 1333-1348 (STASIQPTSDDLVSSA) show a composition bias toward polar residues. Ser1347 carries O-linked (Xyl...) (heparan sulfate) serine glycosylation. A helical membrane pass occupies residues 1497 to 1517 (GMVVGIVAAAALCILILLYAM). Over 1518–1571 (YKYRNRDEGSYQVDETRNYISNSAQSNGTLMKEKQASSKSGHKKQKNKDKEYYV) the chain is Cytoplasmic. The tract at residues 1539-1571 (NSAQSNGTLMKEKQASSKSGHKKQKNKDKEYYV) is disordered.

This sequence belongs to the neurexin family. As to quaternary structure, the laminin G-like domain 2 binds to NXPH1. Specific isoforms bind to alpha-dystroglycan. The cytoplasmic C-terminal region binds to CASK. Specific isoforms bind neuroligins NLGN1, NLGN2 and NLGN3. Interacts with CLSTN3. In terms of processing, O-glycosylated; contains heparan sulfate. Heparan sulfate attachment is required for synapse development by mediating interactions with neuroligins. In terms of tissue distribution, brain and arteries (at protein level).

It localises to the presynaptic cell membrane. Neuronal cell surface protein that may be involved in cell recognition and cell adhesion. May mediate intracellular signaling. The chain is Neurexin-3 (Nrxn3) from Mus musculus (Mouse).